A 428-amino-acid polypeptide reads, in one-letter code: Glutamate-1-semialdehyde 2,1-aminomutase (428 aa).

K265 bears the N6-(pyridoxal phosphate)lysine mark.

It belongs to the class-III pyridoxal-phosphate-dependent aminotransferase family. HemL subfamily. In terms of assembly, homodimer. Requires pyridoxal 5'-phosphate as cofactor.

It localises to the cytoplasm. The catalysed reaction is (S)-4-amino-5-oxopentanoate = 5-aminolevulinate. The protein operates within porphyrin-containing compound metabolism; protoporphyrin-IX biosynthesis; 5-aminolevulinate from L-glutamyl-tRNA(Glu): step 2/2. This Hamiltonella defensa subsp. Acyrthosiphon pisum (strain 5AT) protein is Glutamate-1-semialdehyde 2,1-aminomutase.